A 190-amino-acid chain; its full sequence is Large ribosomal subunit protein bL9 (190 aa).

This sequence belongs to the bacterial ribosomal protein bL9 family.

In terms of biological role, binds to the 23S rRNA. The chain is Large ribosomal subunit protein bL9 from Methylorubrum populi (strain ATCC BAA-705 / NCIMB 13946 / BJ001) (Methylobacterium populi).